Here is a 164-residue protein sequence, read N- to C-terminus: MKNMDVYEILYQFCLEYEVLLDDEKIPLWKLKKEDLDKVDLDLPWTSIRDLAIYLYELKKKQQNSKELIKCDIVEILVGIALLKPEEGSNYMGLVTEDMCLTYLSELITARINCIARYYYMMKKPQNTNIFDEIILKFPQKKDIRASNINDLRELVGKIRNYFK.

This is an uncharacterized protein from Methanocaldococcus jannaschii (strain ATCC 43067 / DSM 2661 / JAL-1 / JCM 10045 / NBRC 100440) (Methanococcus jannaschii).